The sequence spans 618 residues: Serine/threonine-protein kinase TNNI3K (618 aa).

G2 carries the N-myristoyl glycine lipid modification. A coiled-coil region spans residues 21–51; that stretch reads SESYVITIERLEDDLKIKEKELTELRNIFGS. ANK repeat units lie at residues 66-96, 100-129, 133-162, 166-195, 199-228, 234-263, 269-298, 304-335, 339-368, and 381-410; these read NGLSLLHLCCICGGNKSHIRTLMLKGLRPSR, NGFTALHLAVYKDNAELITSLLHGGADIQQ, GGLTALHIATIAGHLEAADVLLQHGANVNI, VFFTPLHIAAYYGHEQVTRLLLKFGADVNV, VGDRPLHLASAKGFLNIAKLLMEEGSKADV, EDHVPLHFCSRFGHHDIVKYLLQNDLEVQP, YGDTPLHLACYNGKFEVAKEIIQISGTESL, FSETAFHSACTYGKSIDLVKFLLDQNVININH, DGHTGLHSACYHGHIHLVQFLLDNGADMNL, and DEQTCLMWAYEKGHDAIVTLLKHYKRPQDE. One can recognise a Protein kinase domain in the interval 463 to 618; the sequence is IEFHEIIGSG…TAHTIYLLAP (156 aa). ATP is bound by residues 469 to 477 and K490; that span reads IGSGSFGKV. Catalysis depends on D588, which acts as the Proton acceptor.

It belongs to the protein kinase superfamily. TKL Ser/Thr protein kinase family. MAP kinase kinase kinase subfamily. Interacts with TNNI3, ACTC, ACTA1, MYBPC3, AIP, FABP3 and HADHB. Mg(2+) serves as cofactor. Post-translationally, autophosphorylated.

The protein localises to the nucleus. It is found in the cytoplasm. It carries out the reaction L-seryl-[protein] + ATP = O-phospho-L-seryl-[protein] + ADP + H(+). The catalysed reaction is L-threonyl-[protein] + ATP = O-phospho-L-threonyl-[protein] + ADP + H(+). May play a role in cardiac physiology. This chain is Serine/threonine-protein kinase TNNI3K, found in Pongo abelii (Sumatran orangutan).